The chain runs to 324 residues: Lipoyl synthase (324 aa).

[4Fe-4S] cluster contacts are provided by C65, C70, C76, C91, C95, C98, and S302. Residues 77-291 (WEDREATFLI…AQYAEGLGFA (215 aa)) form the Radical SAM core domain.

This sequence belongs to the radical SAM superfamily. Lipoyl synthase family. It depends on [4Fe-4S] cluster as a cofactor.

It localises to the cytoplasm. The enzyme catalyses [[Fe-S] cluster scaffold protein carrying a second [4Fe-4S](2+) cluster] + N(6)-octanoyl-L-lysyl-[protein] + 2 oxidized [2Fe-2S]-[ferredoxin] + 2 S-adenosyl-L-methionine + 4 H(+) = [[Fe-S] cluster scaffold protein] + N(6)-[(R)-dihydrolipoyl]-L-lysyl-[protein] + 4 Fe(3+) + 2 hydrogen sulfide + 2 5'-deoxyadenosine + 2 L-methionine + 2 reduced [2Fe-2S]-[ferredoxin]. Its pathway is protein modification; protein lipoylation via endogenous pathway; protein N(6)-(lipoyl)lysine from octanoyl-[acyl-carrier-protein]: step 2/2. Functionally, catalyzes the radical-mediated insertion of two sulfur atoms into the C-6 and C-8 positions of the octanoyl moiety bound to the lipoyl domains of lipoate-dependent enzymes, thereby converting the octanoylated domains into lipoylated derivatives. The sequence is that of Lipoyl synthase from Mycobacterium ulcerans (strain Agy99).